A 234-amino-acid polypeptide reads, in one-letter code: 7-cyano-7-deazaguanine synthase (234 aa).

Position 13 to 23 (13 to 23 (LSGGQDSTTCL)) interacts with ATP. The Zn(2+) site is built by cysteine 193, cysteine 201, cysteine 204, and cysteine 207.

Belongs to the QueC family. Zn(2+) serves as cofactor.

It carries out the reaction 7-carboxy-7-deazaguanine + NH4(+) + ATP = 7-cyano-7-deazaguanine + ADP + phosphate + H2O + H(+). It participates in purine metabolism; 7-cyano-7-deazaguanine biosynthesis. Functionally, catalyzes the ATP-dependent conversion of 7-carboxy-7-deazaguanine (CDG) to 7-cyano-7-deazaguanine (preQ(0)). This chain is 7-cyano-7-deazaguanine synthase, found in Chromobacterium violaceum (strain ATCC 12472 / DSM 30191 / JCM 1249 / CCUG 213 / NBRC 12614 / NCIMB 9131 / NCTC 9757 / MK).